Reading from the N-terminus, the 263-residue chain is Acyl-[acyl-carrier-protein]--UDP-N-acetylglucosamine O-acyltransferase (263 aa).

The protein belongs to the transferase hexapeptide repeat family. LpxA subfamily. Homotrimer.

It localises to the cytoplasm. The enzyme catalyses a (3R)-hydroxyacyl-[ACP] + UDP-N-acetyl-alpha-D-glucosamine = a UDP-3-O-[(3R)-3-hydroxyacyl]-N-acetyl-alpha-D-glucosamine + holo-[ACP]. The protein operates within glycolipid biosynthesis; lipid IV(A) biosynthesis; lipid IV(A) from (3R)-3-hydroxytetradecanoyl-[acyl-carrier-protein] and UDP-N-acetyl-alpha-D-glucosamine: step 1/6. In terms of biological role, involved in the biosynthesis of lipid A, a phosphorylated glycolipid that anchors the lipopolysaccharide to the outer membrane of the cell. The sequence is that of Acyl-[acyl-carrier-protein]--UDP-N-acetylglucosamine O-acyltransferase from Campylobacter jejuni subsp. jejuni serotype O:23/36 (strain 81-176).